Reading from the N-terminus, the 814-residue chain is MAKAAASSALEDLDLSREEVQRFTSAFQDPEFRRMFSEYAAEITDPENRRRYEEEITALERERGVDVRFVHPEPGHVLRTSLDGEHRCYVNVCSNSLVGVPSSRPGPGRGGTAAGSHWSLPYSLAPGRQYAGRNGARYTVYDVVFHPEALALARSHERFREMLDATALEAVEQQFGVRLDRRNAKTLKIKYKGMPEAAVLRTPLPGGVPAQPEGEPPGLFPDPPYPYRYPAAAAANTARSPASPAPEAVQRPEPTEPRCSVVQRHHVDLQDYRCSRDAAPSTVPHELVVTIELPLLRSVERAELEVKGKLLCLDSRNPDYRLRLSLPYPVDDGRGKAQYNKARRQLVVTLPVALADARQEPPAATPEEPAEETGTDDVARTSAGDFAAAREESADGTGADHGEKSGVGAPDPGAAHAEGELVPEPEQDFGGDSVAPLDLGKGTSPGDRSLPYSAFPGGDTESLCGDPGVQTNEEQERTRHDTAGSAMGDPGTESIAPVCPPLQCNQDEDSLTLLIQVPGILPQTLHGHLSPVGYELCFSTQDSGYSCTLQFAPENKLSTREPETSVSLNNAVIVLAKSPESHGLWREWYCGLNKESLEERLFINEENVNGFLEEVLCSPLKQARSLAPPLIEVLQATDEQVQIHAELQECSDPAGLQGKGKGVREGCPLSEAEAADQSATSPAASDSAAAVEALKINTHGSAVDLQHGCPEVPHVLSGKPLQPEAKMDPEFIRESSTTYSTEEKENIREPVISKGEKINGDHPSSLLNKTVVQNIPDFDTIKETNMQDGSVQIIRDHTTHCAFSFQNPLLYDLD.

Residues 234–246 (AANTARSPASPAP) show a composition bias toward low complexity. Disordered regions lie at residues 234–259 (AANT…EPRC) and 357–490 (ARQE…MGDP). Over residues 388–404 (AAREESADGTGADHGEK) the composition is skewed to basic and acidic residues. Phosphoserine is present on residues S444 and S618. The disordered stretch occupies residues 654–686 (AGLQGKGKGVREGCPLSEAEAADQSATSPAASD). Positions 675–686 (ADQSATSPAASD) are enriched in low complexity.

Belongs to the PIH1 family. Kintoun subfamily. Interacts with DNAI2 and HSPA1A. Interacts with CFAP300. Interacts with DNAAF4. Interacts with DNAAF6/PIH1D3. As to expression, expressed in nearly all organs of adult, with higher expression in tissues known to have motile cilia and flagella, such as brain and testis.

The protein resides in the cytoplasm. The protein localises to the dynein axonemal particle. Its function is as follows. Required for cytoplasmic pre-assembly of axonemal dyneins, thereby playing a central role in motility in cilia and flagella. Involved in pre-assembly of dynein arm complexes in the cytoplasm before intraflagellar transport loads them for the ciliary compartment. The polypeptide is Protein kintoun (Mus musculus (Mouse)).